Here is a 177-residue protein sequence, read N- to C-terminus: Cell division inhibitor SulA (177 aa).

Residues 112–118 form a ftsZ binding region; that stretch reads ALASGNY. The lon protease binding stretch occupies residues 170–177; the sequence is KIHSIHYH.

Belongs to the SulA family. As to quaternary structure, interacts with FtsZ. In terms of processing, is rapidly cleaved and degraded by the Lon protease once DNA damage is repaired.

In terms of biological role, component of the SOS system and an inhibitor of cell division. Accumulation of SulA causes rapid cessation of cell division and the appearance of long, non-septate filaments. In the presence of GTP, binds a polymerization-competent form of FtsZ in a 1:1 ratio, thus inhibiting FtsZ polymerization and therefore preventing it from participating in the assembly of the Z ring. This mechanism prevents the premature segregation of damaged DNA to daughter cells during cell division. The polypeptide is Cell division inhibitor SulA (Photorhabdus laumondii subsp. laumondii (strain DSM 15139 / CIP 105565 / TT01) (Photorhabdus luminescens subsp. laumondii)).